The chain runs to 806 residues: Enhancer of polycomb-like protein 1 (806 aa).

2 disordered regions span residues 403-461 (AITS…QEIG) and 751-806 (SLQQ…NAAA). Residues 411–420 (KRAKSSKSSK) are compositionally biased toward basic residues. Over residues 421 to 439 (LHKEDSGLYADEKGSEPKK) the composition is skewed to basic and acidic residues. The segment covering 751 to 779 (SLQQQQMLQKGQQPINNAPHSQSSSPPSH) has biased composition (low complexity). Residues 785–795 (NPGSTPNQSSP) show a composition bias toward polar residues.

The protein belongs to the enhancer of polycomb family. Component of the NuA4 histone acetyltransferase complex.

The protein resides in the nucleus. Its function is as follows. Component of the NuA4 histone acetyltransferase complex which is involved in transcriptional activation of selected genes principally by acetylation of nucleosomal histone H4 and H2A. The NuA4 complex is also involved in DNA repair. Involved in gene silencing by neighboring heterochromatin, blockage of the silencing spreading along the chromosome, and required for cell cycle progression through G2/M. The polypeptide is Enhancer of polycomb-like protein 1 (EPL1) (Kluyveromyces lactis (strain ATCC 8585 / CBS 2359 / DSM 70799 / NBRC 1267 / NRRL Y-1140 / WM37) (Yeast)).